Consider the following 1887-residue polypeptide: MSTPTDSKAPLRQVKRVQFGILSPDEIRRMSVTEGGVQFAETMEGGRPKLGGLMDPRQGVIDRTSRCQTCAGNMTECPGHFGHIDLAKPVFHIGFITKTIKILRCVCFYCSKMLVSPHNPKIKEIVMKSRGQPRKRLAYVYDLCKGKTICEGGEDMDLTKENQQPDPNKKPGHGGCGHYQPSIRRTGLDLTAEWKHQNEDSQEKKIVVSAERVWEILKHITDEECFILGMDPKYARPDWMIVTVLPVPPLAVRPAVVMFGAAKNQDDLTHKLSDIIKANNELRKNEASGAAAHVIQENIKMLQFHVATLVDNDMPGMPRAMQKSGKPLKAIKARLKGKEGRIRGNLMGKRVDFSARTVITPDPNLRIDQVGVPRSIAQNLTFPELVTPFNIDRMQELVRRGNSQYPGAKYIVRDNGERIDLRFHPKSSDLHLQCGYKVERHLRDDDLVIFNRQPTLHKMSMMGHRVKVLPWSTFRMNLSCTSPYNADFDGDEMNLHVPQSMETRAEVENIHITPRQIITPQANKPVMGIVQDTLTAVRKMTKRDVFITREQVMNLLMFLPTWDAKMPQPCILKPRPLWTGKQIFSLIIPGNVNMIRTHSTHPDEEDEGPYKWISPGDTKVMVEHGELIMGILCKKSLGTSAGSLLHICFLELGHDIAGRFYGNIQTVINNWLLFEGHSIGIGDTIADPQTYNEIQQAIKKAKDDVINVIQKAHNMELEPTPGNTLRQTFENKVNRILNDARDKTGGSAKKSLTEYNNLKAMVVSGSKGSNINISQVIACVGQQNVEGKRIPYGFRKRTLPHFIKDDYGPESRGFVENSYLAGLTPSEFYFHAMGGREGLIDTAVKTAETGYIQRRLIKAMESVMVNYDGTVRNSVGQLIQLRYGEDGLCGELVEFQNMPTVKLSNKSFEKRFKFDWSNERLMKKVFTDDVIKEMTDSSEAIQELEAEWDRLVSDRDSLRQIFPNGESKVVLPCNLQRMIWNVQKIFHINKRLPTDLSPIRVIKGVKTLLERCVIVTGNDRISKQANENATLLFQCLIRSTLCTKYVSEEFRLSTEAFEWLVGEIETRFQQAQANPGEMVGALAAQSLGEPATQMTLNTFHFAGVSSKNVTLGVPRLKEIINISKKPKAPSLTVFLTGGAARDAEKAKNVLCRLEHTTLRKVTANTAIYYDPDPQRTVISEDQEFVNVYYEMPDFDPTRISPWLLRIELDRKRMTDKKLTMEQIAEKINVGFGEDLNCIFNDDNADKLVLRIRIMNNEENKFQDEDEAVDKMEDDMFLRCIEANMLSDMTLQGIEAIGKVYMHLPQTDSKKRIVITETGEFKAIGEWLLETDGTSMMKVLSERDVDPIRTSSNDICEIFQVLGIEAVRKSVEKEMNAVLQFYGLYVNYRHLALLCDVMTAKGHLMAITRHGINRQDTGALMRCSFEETVDVLMDAAAHAETDPMRGVSENIIMGQLPKMGTGCFDLLLDAEKCRFGIEIPNTLGNSMLGGAAMFIGGGSTPSMTPPMTPWANCNTPRYFSPPGHVSAMTPGGPSFSPSAASDASGMSPSWSPAHPGSSPSSPGPSMSPYFPASPSVSPSYSPTSPNYTASSPGGASPNYSPSSPNYSPTSPLYASPRYASTTPNFNPQSTGYSPSSSGYSPTSPVYSPTVQFQSSPSFAGSGSNIYSPGNAYSPSSSNYSPNSPSYSPTSPSYSPSSPSYSPTSPCYSPTSPSYSPTSPNYTPVTPSYSPTSPNYSASPQYSPASPAYSQTGVKYSPTSPTYSPPSPSYDGSPGSPQYTPGSPQYSPASPKYSPTSPLYSPSSPQHSPSNQYSPTGSTYSATSPRYSPNMSIYSPSSTKYSPTSPTYTPTARNYSPTSPMYSPTAPSHYSPTSPAYSPSSPTFEESED.

Residues Cys-67, Cys-70, Cys-77, His-80, Cys-107, Cys-110, Cys-150, and Cys-176 each contribute to the Zn(2+) site. Positions 156 to 178 (MDLTKENQQPDPNKKPGHGGCGH) are disordered. 3 residues coordinate Mg(2+): Asp-487, Asp-489, and Asp-491. The segment at 825–837 (PSEFYFHAMGGRE) is bridging helix. Lys-1260 participates in a covalent cross-link: Glycyl lysine isopeptide (Lys-Gly) (interchain with G-Cter in ubiquitin). Disordered regions lie at residues 1528–1565 (TPGGPSFSPSAASDASGMSPSWSPAHPGSSPSSPGPSM) and 1579–1887 (YSPT…ESED). Low complexity-rich tracts occupy residues 1529–1565 (PGGPSFSPSAASDASGMSPSWSPAHPGSSPSSPGPSM), 1579–1610 (YSPTSPNYTASSPGGASPNYSPSSPNYSPTSP), and 1626–1650 (PQSTGYSPSSSGYSPTSPVYSPTVQ). Copy 1 of the repeat occupies 1579 to 1585 (YSPTSPN). The segment at 1579 to 1881 (YSPTSPNYTA…SPAYSPSSPT (303 aa)) is C-terminal domain (CTD); 32 X 7 AA approximate tandem repeats of Y-[ST]-P-[STNVAPGN]-[STGMA]-[PSTR]-[SNAGCQKTLRIMH]. A 2; approximate repeat occupies 1586–1592 (YTASSPG). 4 consecutive repeat copies span residues 1598-1604 (YSPSSPN), 1605-1611 (YSPTSPL), 1631-1637 (YSPSSSG), and 1638-1644 (YSPTSPV). Residues 1651–1664 (FQSSPSFAGSGSNI) are compositionally biased toward polar residues. Residues 1665–1760 (YSPGNAYSPS…GVKYSPTSPT (96 aa)) are compositionally biased toward low complexity. Repeat copies occupy residues 1671 to 1677 (YSPSSSN), 1678 to 1684 (YSPNSPS), 1685 to 1691 (YSPTSPS), 1692 to 1698 (YSPSSPS), 1699 to 1705 (YSPTSPC), 1706 to 1712 (YSPTSPS), 1713 to 1719 (YSPTSPN), 1720 to 1726 (YTPVTPS), 1727 to 1733 (YSPTSPN), 1740 to 1746 (YSPASPA), 1754 to 1760 (YSPTSPT), 1761 to 1767 (YSPPSPS), 1777 to 1783 (YTPGSPQ), 1784 to 1790 (YSPASPK), 1791 to 1797 (YSPTSPL), 1798 to 1804 (YSPSSPQ), and 1811 to 1817 (YSPTGST). Polar residues predominate over residues 1776 to 1786 (QYTPGSPQYSP). Residues 1788-1813 (SPKYSPTSPLYSPSSPQHSPSNQYSP) are compositionally biased toward low complexity. The span at 1814-1831 (TGSTYSATSPRYSPNMSI) shows a compositional bias: polar residues. One copy of the 24; approximate repeat lies at 1818–1824 (YSATSPR). A run of 8 repeats spans residues 1825-1831 (YSPNMSI), 1832-1838 (YSPSSTK), 1839-1845 (YSPTSPT), 1846-1852 (YTPTARN), 1853-1859 (YSPTSPM), 1860-1866 (YSPTAPS), 1868-1874 (YSPTSPA), and 1875-1881 (YSPSSPT). A compositionally biased stretch (low complexity) spans 1832 to 1849 (YSPSSTKYSPTSPTYTPT). Polar residues predominate over residues 1850–1859 (ARNYSPTSPM). Over residues 1860 to 1881 (YSPTAPSHYSPTSPAYSPSSPT) the composition is skewed to low complexity.

This sequence belongs to the RNA polymerase beta' chain family. As to quaternary structure, component of the RNA polymerase II (Pol II) complex consisting of 12 subunits. In terms of processing, the tandem 7 residues repeats in the C-terminal domain (CTD) can be highly phosphorylated. The phosphorylation activates Pol II. Phosphorylation occurs mainly at residues 'Ser-2' and 'Ser-5' of the heptapeptide repeat. The phosphorylation state is believed to result from the balanced action of site-specific CTD kinases and phosphatase, and a 'CTD code' that specifies the position of Pol II within the transcription cycle has been proposed. Following transcription stress, the elongating form of RNA polymerase II (RNA pol IIo) is polyubiquitinated via 'Lys-63'-linkages on Lys-1260 at DNA damage sites without leading to degradation: ubiquitination promotes RNA pol IIo backtracking to allow access by the transcription-coupled nucleotide excision repair (TC-NER) machinery. Subsequent DEF1-dependent polyubiquitination by the elongin complex via 'Lys-48'-linkages may lead to proteasome-mediated degradation; presumably at stalled RNA pol II where TC-NER has failed, to halt global transcription and enable 'last resort' DNA repair pathways.

The protein resides in the nucleus. The enzyme catalyses RNA(n) + a ribonucleoside 5'-triphosphate = RNA(n+1) + diphosphate. DNA-dependent RNA polymerase catalyzes the transcription of DNA into RNA using the four ribonucleoside triphosphates as substrates. Largest and catalytic component of RNA polymerase II which synthesizes mRNA precursors and many functional non-coding RNAs. Forms the polymerase active center together with the second largest subunit. Pol II is the central component of the basal RNA polymerase II transcription machinery. It is composed of mobile elements that move relative to each other. RPB1 is part of the core element with the central large cleft, the clamp element that moves to open and close the cleft and the jaws that are thought to grab the incoming DNA template. At the start of transcription, a single-stranded DNA template strand of the promoter is positioned within the central active site cleft of Pol II. A bridging helix emanates from RPB1 and crosses the cleft near the catalytic site and is thought to promote translocation of Pol II by acting as a ratchet that moves the RNA-DNA hybrid through the active site by switching from straight to bent conformations at each step of nucleotide addition. During transcription elongation, Pol II moves on the template as the transcript elongates. Elongation is influenced by the phosphorylation status of the C-terminal domain (CTD) of Pol II largest subunit (RPB1), which serves as a platform for assembly of factors that regulate transcription initiation, elongation, termination and mRNA processing. This Drosophila melanogaster (Fruit fly) protein is DNA-directed RNA polymerase II subunit RPB1.